The following is a 155-amino-acid chain: Ribosomal RNA large subunit methyltransferase H (155 aa).

Residues Leu-72, Gly-103, and 122–127 contribute to the S-adenosyl-L-methionine site; that span reads LSALTL.

The protein belongs to the RNA methyltransferase RlmH family. As to quaternary structure, homodimer.

It is found in the cytoplasm. The catalysed reaction is pseudouridine(1915) in 23S rRNA + S-adenosyl-L-methionine = N(3)-methylpseudouridine(1915) in 23S rRNA + S-adenosyl-L-homocysteine + H(+). Specifically methylates the pseudouridine at position 1915 (m3Psi1915) in 23S rRNA. The sequence is that of Ribosomal RNA large subunit methyltransferase H from Escherichia fergusonii (strain ATCC 35469 / DSM 13698 / CCUG 18766 / IAM 14443 / JCM 21226 / LMG 7866 / NBRC 102419 / NCTC 12128 / CDC 0568-73).